Here is a 319-residue protein sequence, read N- to C-terminus: Geranylgeranyl pyrophosphate synthase (319 aa).

The isopentenyl diphosphate site is built by Lys42, Arg45, and His74. Mg(2+)-binding residues include Asp81 and Asp85. Arg90 provides a ligand contact to dimethylallyl diphosphate. Arg91 is a binding site for isopentenyl diphosphate. Positions 172, 173, 210, 226, and 236 each coordinate dimethylallyl diphosphate.

Belongs to the FPP/GGPP synthase family. In terms of assembly, homodimer. It depends on Mg(2+) as a cofactor.

It catalyses the reaction isopentenyl diphosphate + dimethylallyl diphosphate = (2E)-geranyl diphosphate + diphosphate. The catalysed reaction is isopentenyl diphosphate + (2E)-geranyl diphosphate = (2E,6E)-farnesyl diphosphate + diphosphate. The enzyme catalyses isopentenyl diphosphate + (2E,6E)-farnesyl diphosphate = (2E,6E,10E)-geranylgeranyl diphosphate + diphosphate. Its pathway is isoprenoid biosynthesis; geranyl diphosphate biosynthesis; geranyl diphosphate from dimethylallyl diphosphate and isopentenyl diphosphate: step 1/1. It participates in isoprenoid biosynthesis; farnesyl diphosphate biosynthesis; farnesyl diphosphate from geranyl diphosphate and isopentenyl diphosphate: step 1/1. The protein operates within isoprenoid biosynthesis; geranylgeranyl diphosphate biosynthesis; geranylgeranyl diphosphate from farnesyl diphosphate and isopentenyl diphosphate: step 1/1. Its function is as follows. Catalyzes the addition of 3 molecules of isopentenyl diphosphate (IPP) onto dimethylallyl diphosphate (DMAPP) to form geranylgeranyl pyrophosphate (GGPP). Catalyzes the synthesis of geranylgeranyl pyrophosphate as a major product and of farnesyl pyrophosphate in smaller amounts. The polypeptide is Geranylgeranyl pyrophosphate synthase (Geoglobus acetivorans).